The following is a 499-amino-acid chain: Probable cytosol aminopeptidase (499 aa).

Mn(2+) contacts are provided by lysine 269 and aspartate 274. Lysine 281 is an active-site residue. Residues aspartate 292, aspartate 351, and glutamate 353 each coordinate Mn(2+). Arginine 355 is an active-site residue.

Belongs to the peptidase M17 family. Mn(2+) is required as a cofactor.

The protein resides in the cytoplasm. The catalysed reaction is Release of an N-terminal amino acid, Xaa-|-Yaa-, in which Xaa is preferably Leu, but may be other amino acids including Pro although not Arg or Lys, and Yaa may be Pro. Amino acid amides and methyl esters are also readily hydrolyzed, but rates on arylamides are exceedingly low.. It catalyses the reaction Release of an N-terminal amino acid, preferentially leucine, but not glutamic or aspartic acids.. Functionally, presumably involved in the processing and regular turnover of intracellular proteins. Catalyzes the removal of unsubstituted N-terminal amino acids from various peptides. In Actinobacillus pleuropneumoniae serotype 7 (strain AP76), this protein is Probable cytosol aminopeptidase.